A 139-amino-acid polypeptide reads, in one-letter code: Endoribonuclease YbeY (139 aa).

Zn(2+)-binding residues include H99, H103, and H109.

The protein belongs to the endoribonuclease YbeY family. It depends on Zn(2+) as a cofactor.

The protein resides in the cytoplasm. Single strand-specific metallo-endoribonuclease involved in late-stage 70S ribosome quality control and in maturation of the 3' terminus of the 16S rRNA. The polypeptide is Endoribonuclease YbeY (Sulfurimonas denitrificans (strain ATCC 33889 / DSM 1251) (Thiomicrospira denitrificans (strain ATCC 33889 / DSM 1251))).